A 480-amino-acid polypeptide reads, in one-letter code: Probable histone deacetylase 1-B (480 aa).

Residues 10-321 are histone deacetylase; the sequence is KVCYYYDGDV…WTYETAVALD (312 aa). The active site involves histidine 141. A disordered region spans residues 387–480; that stretch reads DSVHDDSGEE…KRVKEETKSV (94 aa). Over residues 401–416 the composition is skewed to basic and acidic residues; sequence PDKRISIRSSDKRIAC. Acidic residues predominate over residues 417 to 427; the sequence is DEEFSDSEDEG. The segment covering 443–480 has biased composition (basic and acidic residues); that stretch reads VKTEEEKEGEDKKDVKEEEKAKDEKTDSKRVKEETKSV.

The protein belongs to the histone deacetylase family. HD type 1 subfamily. As to quaternary structure, found in a large complex with RBBP4 and MI-2.

Its subcellular location is the nucleus. The protein resides in the cytoplasm. The catalysed reaction is N(6)-acetyl-L-lysyl-[histone] + H2O = L-lysyl-[histone] + acetate. It catalyses the reaction N(6)-acetyl-L-lysyl-[protein] + H2O = L-lysyl-[protein] + acetate. It carries out the reaction N(6)-(2E)-butenoyl-L-lysyl-[protein] + H2O = (2E)-2-butenoate + L-lysyl-[protein]. In terms of biological role, histone deacetylase that catalyzes the deacetylation of lysine residues on the N-terminal part of the core histones (H2A, H2B, H3 and H4). Histone deacetylation gives a tag for epigenetic repression and plays an important role in transcriptional regulation, cell cycle progression and developmental events. Histone deacetylases act via the formation of large multiprotein complexes. Also functions as a deacetylase for non-histone proteins. In addition to protein deacetylase activity, also has protein-lysine deacylase activity: acts as a protein decrotonylase by mediating decrotonylation ((2E)-butenoyl) of histones. This chain is Probable histone deacetylase 1-B (hdac1-b), found in Xenopus laevis (African clawed frog).